The primary structure comprises 338 residues: Glyceraldehyde-3-phosphate dehydrogenase (338 aa).

Residues 13–14, Asp35, and Arg80 each bind NAD(+); that span reads RI. D-glyceraldehyde 3-phosphate-binding positions include 151-153, Thr182, 211-212, and Arg234; these read SCT and TG. The Nucleophile role is filled by Cys152. Residue Asn317 participates in NAD(+) binding.

The protein belongs to the glyceraldehyde-3-phosphate dehydrogenase family. In terms of assembly, homotetramer.

The protein resides in the cytoplasm. The catalysed reaction is D-glyceraldehyde 3-phosphate + phosphate + NAD(+) = (2R)-3-phospho-glyceroyl phosphate + NADH + H(+). The protein operates within carbohydrate degradation; glycolysis; pyruvate from D-glyceraldehyde 3-phosphate: step 1/5. The sequence is that of Glyceraldehyde-3-phosphate dehydrogenase (gpdA) from Aspergillus oryzae (strain ATCC 42149 / RIB 40) (Yellow koji mold).